A 375-amino-acid polypeptide reads, in one-letter code: E3 ubiquitin-protein ligase IE2 (375 aa).

Residues 1–12 show a composition bias toward polar residues; that stretch reads MSRINNADTPTN. Disordered stretches follow at residues 1–61 and 115–142; these read MSRI…VGDR and LTTT…DYNS. The segment at 177–225 adopts an RING-type zinc-finger fold; it reads CHICSCTFTDIKNYNSNFVTSSECNHAVCFKCYVSIVFNKEAYKCSICN. Residues 272-348 adopt a coiled-coil conformation; it reads KTIIEELQLE…TFLQNQLDAQ (77 aa).

This sequence belongs to the alphabaculovirus IE2 protein family. In terms of assembly, homooligomer. In terms of processing, auto-ubiquitinated.

It is found in the host nucleus. The catalysed reaction is S-ubiquitinyl-[E2 ubiquitin-conjugating enzyme]-L-cysteine + [acceptor protein]-L-lysine = [E2 ubiquitin-conjugating enzyme]-L-cysteine + N(6)-ubiquitinyl-[acceptor protein]-L-lysine.. In terms of biological role, RING-finger E3 ubiquitin ligase that plays an important regulatory role during the initial stages of infection. Migrates to specific nuclear foci early in infection supposely to prepare the sites for viral replication by targeting and ubiquitinating host proteins. This Hyphantria cunea nuclear polyhedrosis virus (HcNPV) protein is E3 ubiquitin-protein ligase IE2 (IE2).